We begin with the raw amino-acid sequence, 207 residues long: Ribosomal RNA small subunit methyltransferase G (207 aa).

S-adenosyl-L-methionine contacts are provided by residues Gly-73, Leu-78, 124 to 125, and Arg-139; that span reads VE.

It belongs to the methyltransferase superfamily. RNA methyltransferase RsmG family.

It is found in the cytoplasm. It catalyses the reaction guanosine(527) in 16S rRNA + S-adenosyl-L-methionine = N(7)-methylguanosine(527) in 16S rRNA + S-adenosyl-L-homocysteine. Its function is as follows. Specifically methylates the N7 position of guanine in position 527 of 16S rRNA. The chain is Ribosomal RNA small subunit methyltransferase G from Escherichia coli O17:K52:H18 (strain UMN026 / ExPEC).